The chain runs to 101 residues: Large ribosomal subunit protein uL24 (101 aa).

Belongs to the universal ribosomal protein uL24 family. Part of the 50S ribosomal subunit.

Functionally, one of two assembly initiator proteins, it binds directly to the 5'-end of the 23S rRNA, where it nucleates assembly of the 50S subunit. In terms of biological role, one of the proteins that surrounds the polypeptide exit tunnel on the outside of the subunit. The chain is Large ribosomal subunit protein uL24 from Borrelia turicatae (strain 91E135).